A 110-amino-acid chain; its full sequence is uncharacterized protein (110 aa).

The helical transmembrane segment at 29–49 (GLAFIFFFLVAFYFFPAFWDL) threads the bilayer.

Its subcellular location is the membrane. This is an uncharacterized protein from Saccharomyces cerevisiae (strain ATCC 204508 / S288c) (Baker's yeast).